The following is a 147-amino-acid chain: Ribosome maturation factor RimP (147 aa).

Belongs to the RimP family.

The protein resides in the cytoplasm. Functionally, required for maturation of 30S ribosomal subunits. The protein is Ribosome maturation factor RimP of Legionella pneumophila (strain Paris).